A 240-amino-acid chain; its full sequence is Arylmalonate decarboxylase (240 aa).

The enzyme catalyses 2-aryl-2-methylmalonate + H(+) = 2-arylpropionate + CO2. The chain is Arylmalonate decarboxylase from Bordetella bronchiseptica (Alcaligenes bronchisepticus).